Here is a 140-residue protein sequence, read N- to C-terminus: Profilin-1 (140 aa).

At A2 the chain carries N-acetylalanine. S28 is subject to Phosphoserine. K54 is covalently cross-linked (Glycyl lysine isopeptide (Lys-Gly) (interchain with G-Cter in SUMO2); alternate). K54 is covalently cross-linked (Glycyl lysine isopeptide (Lys-Gly) (interchain with G-Cter in ubiquitin); alternate). S57 bears the Phosphoserine mark. Position 108 is an N6-acetyllysine (K108). Y129 bears the Phosphotyrosine mark. S138 carries the post-translational modification Phosphoserine; by ROCK1.

It belongs to the profilin family. In terms of assembly, found in a complex with XPO6, Ran, ACTB and PFN1. Interacts with ACTB. Interacts with VASP. Interacts with HTT. Interacts with SH3BGRL. Occurs in many kinds of cells as a complex with monomeric actin in a 1:1 ratio. Interacts with ACTMAP. Phosphorylation at Ser-138 reduces its affinity for G-actin and blocks its interaction with HTT, reducing its ability to inhibit androgen receptor (AR) and HTT aggregation.

The protein resides in the cytoplasm. Its subcellular location is the cytoskeleton. In terms of biological role, binds to actin and affects the structure of the cytoskeleton. At high concentrations, profilin prevents the polymerization of actin, whereas it enhances it at low concentrations. By binding to PIP2, it inhibits the formation of IP3 and DG. Inhibits androgen receptor (AR) and HTT aggregation and binding of G-actin is essential for its inhibition of AR. This is Profilin-1 (PFN1) from Bos taurus (Bovine).